The sequence spans 362 residues: 5'-tyrosyl-DNA phosphodiesterase (362 aa).

Positions 1–10 (MSNSDDEIQE) are enriched in acidic residues. A disordered region spans residues 1–43 (MSNSDDEIQEIEAKRQKMSQEDSEVEIEILDEPEQGKLKNSSM). The segment covering 11-20 (IEAKRQKMSQ) has biased composition (basic and acidic residues). Acidic residues predominate over residues 21-33 (EDSEVEIEILDEP). The segment at 126 to 130 (NIDGL) is interaction with 5' end of substrate DNA. Positions 128 and 158 each coordinate Mg(2+). Positions 232 to 237 (HLESTR) are interaction with 5' end of substrate DNA. Asp271 functions as the Proton donor/acceptor in the catalytic mechanism. Residues 273-275 (NLR) form an interaction with 5' end of substrate DNA region.

Belongs to the CCR4/nocturin family. TTRAP/TDP2 subfamily. Interacts with mxl-1; the interaction promotes axon regeneration after injury. Interacts with ets-4; the interaction is required for the sumoylation of ets-4. It depends on Mg(2+) as a cofactor. Mn(2+) is required as a cofactor.

It is found in the nucleus. It localises to the PML body. In terms of biological role, DNA repair enzyme that can remove a variety of covalent adducts from DNA through hydrolysis of a 5'-phosphodiester bond, giving rise to DNA with a free 5' phosphate. Catalyzes the hydrolysis of dead-end complexes between DNA and the topoisomerase 2 (top2) active site tyrosine residue. Hydrolyzes 5'-phosphoglycolates on protruding 5' ends on DNA double-strand breaks (DSBs) due to DNA damage by radiation and free radicals. Inhibits axon regeneration after neuronal injury by promoting the sumoylation of ets-4, thereby inhibiting the phosphorylation of ets-4 required for probable interaction with cebp-1 and activation of svh-2 expression. This chain is 5'-tyrosyl-DNA phosphodiesterase, found in Caenorhabditis elegans.